A 153-amino-acid polypeptide reads, in one-letter code: MAKRIIYPLYQLGNPQLRIFRPTFNMTLVRPGKEQPPDTVQFRISMAMTKCDVRNYLEKIYSVPVSAVRTRIQYCSNKKRNHLNQRVKRPDYKVAYVQLAQQQTFQFPDIFPEKDKKSKEGSVEEMHEKFMEDERQRQKPDPRRGGVTEWFGL.

Residues 110-153 (IFPEKDKKSKEGSVEEMHEKFMEDERQRQKPDPRRGGVTEWFGL) form a disordered region. Basic and acidic residues predominate over residues 111–146 (FPEKDKKSKEGSVEEMHEKFMEDERQRQKPDPRRGG).

Belongs to the universal ribosomal protein uL23 family. In terms of assembly, component of the mitochondrial ribosome large subunit (39S) which comprises a 16S rRNA and about 50 distinct proteins.

The protein localises to the mitochondrion. In Danio rerio (Zebrafish), this protein is Large ribosomal subunit protein uL23m (mrpl23).